Here is a 399-residue protein sequence, read N- to C-terminus: CCA-adding enzyme (399 aa).

ATP-binding residues include glycine 32 and arginine 35. Positions 32 and 35 each coordinate CTP. Residues aspartate 45 and aspartate 47 each contribute to the Mg(2+) site. Residues arginine 116, aspartate 159, arginine 162, arginine 165, and arginine 168 each coordinate ATP. CTP is bound by residues arginine 116, aspartate 159, arginine 162, arginine 165, and arginine 168.

It belongs to the tRNA nucleotidyltransferase/poly(A) polymerase family. Bacterial CCA-adding enzyme type 3 subfamily. Homodimer. Mg(2+) is required as a cofactor.

It catalyses the reaction a tRNA precursor + 2 CTP + ATP = a tRNA with a 3' CCA end + 3 diphosphate. The enzyme catalyses a tRNA with a 3' CCA end + 2 CTP + ATP = a tRNA with a 3' CCACCA end + 3 diphosphate. Catalyzes the addition and repair of the essential 3'-terminal CCA sequence in tRNAs without using a nucleic acid template. Adds these three nucleotides in the order of C, C, and A to the tRNA nucleotide-73, using CTP and ATP as substrates and producing inorganic pyrophosphate. tRNA 3'-terminal CCA addition is required both for tRNA processing and repair. Also involved in tRNA surveillance by mediating tandem CCA addition to generate a CCACCA at the 3' terminus of unstable tRNAs. While stable tRNAs receive only 3'-terminal CCA, unstable tRNAs are marked with CCACCA and rapidly degraded. This is CCA-adding enzyme from Streptococcus pneumoniae serotype 4 (strain ATCC BAA-334 / TIGR4).